The following is a 722-amino-acid chain: Polyribonucleotide nucleotidyltransferase (722 aa).

Aspartate 487 and aspartate 493 together coordinate Mg(2+). Residues 554–613 enclose the KH domain; that stretch reads PRIETFKIPTDKIREVIGTGGKVIREIVEKTGAKVNIEDDGTVKVASSDGESIKAAIKWI. The S1 motif domain occupies 623–691; it reads GEIYEGTVVK…DRGKTRLSMK (69 aa). The segment at 697 to 722 is disordered; the sequence is TGEDLEAKQKAEAKAEGEAPAQAAGE. The span at 701–713 shows a compositional bias: basic and acidic residues; the sequence is LEAKQKAEAKAEG.

Belongs to the polyribonucleotide nucleotidyltransferase family. Mg(2+) serves as cofactor.

It is found in the cytoplasm. The enzyme catalyses RNA(n+1) + phosphate = RNA(n) + a ribonucleoside 5'-diphosphate. Its function is as follows. Involved in mRNA degradation. Catalyzes the phosphorolysis of single-stranded polyribonucleotides processively in the 3'- to 5'-direction. The protein is Polyribonucleotide nucleotidyltransferase of Rhodopseudomonas palustris (strain TIE-1).